A 357-amino-acid chain; its full sequence is H-2 class I histocompatibility antigen, D-37 alpha chain (357 aa).

Residues 1–20 form the signal peptide; that stretch reads MLLFAHLLQLLVSATVPTQS. An alpha-1 region spans residues 21–110; sequence SPHSLRYFTT…LLGYYNQSND (90 aa). Residues 21 to 304 are Extracellular-facing; it reads SPHSLRYFTT…EPPPSTVSNM (284 aa). N106 carries N-linked (GlcNAc...) asparagine glycosylation. An alpha-2 region spans residues 111 to 202; sequence ESHTLQWMYG…RLGNETLQRS (92 aa). An intrachain disulfide couples C121 to C184. N196 carries an N-linked (GlcNAc...) asparagine glycan. The interval 203-294 is alpha-3; sequence DPPKAHVTHH…GLPEPLTLRW (92 aa). The Ig-like C1-type domain maps to 205-293; the sequence is PKAHVTHHPR…EGLPEPLTLR (89 aa). C223 and C279 are oxidised to a cystine. The tract at residues 295–304 is connecting peptide; sequence EPPPSTVSNM. A helical membrane pass occupies residues 305-327; sequence VIIAVLVVLGAVIILGAVVAFVM. The Cytoplasmic portion of the chain corresponds to 328 to 357; the sequence is KRRRHIGVKGCYAHVLGSKSFQTSDWPQKA. Phosphoserine is present on S347.

It belongs to the MHC class I family. Heterodimer of an alpha chain and a beta chain (beta-2-microglobulin).

The protein resides in the membrane. Involved in the presentation of foreign antigens to the immune system. The chain is H-2 class I histocompatibility antigen, D-37 alpha chain (H2-T23) from Mus musculus (Mouse).